The sequence spans 291 residues: Light-independent protochlorophyllide reductase iron-sulfur ATP-binding protein (291 aa).

ATP-binding positions include 10-15 (GIGKST) and K39. Mg(2+) is bound at residue S14. C95 and C129 together coordinate [4Fe-4S] cluster. 180 to 181 (NR) lines the ATP pocket.

The protein belongs to the NifH/BchL/ChlL family. Homodimer. Protochlorophyllide reductase is composed of three subunits; ChlL, ChlN and ChlB. [4Fe-4S] cluster is required as a cofactor.

The protein localises to the plastid. Its subcellular location is the chloroplast. The catalysed reaction is chlorophyllide a + oxidized 2[4Fe-4S]-[ferredoxin] + 2 ADP + 2 phosphate = protochlorophyllide a + reduced 2[4Fe-4S]-[ferredoxin] + 2 ATP + 2 H2O. It participates in porphyrin-containing compound metabolism; chlorophyll biosynthesis (light-independent). Component of the dark-operative protochlorophyllide reductase (DPOR) that uses Mg-ATP and reduced ferredoxin to reduce ring D of protochlorophyllide (Pchlide) to form chlorophyllide a (Chlide). This reaction is light-independent. The L component serves as a unique electron donor to the NB-component of the complex, and binds Mg-ATP. This Pinus thunbergii (Japanese black pine) protein is Light-independent protochlorophyllide reductase iron-sulfur ATP-binding protein.